A 172-amino-acid chain; its full sequence is Translocator protein 2 (172 aa).

Transmembrane regions (helical) follow at residues 3–23 (PQGAIFVALPHLGPILVSLLT), 45–65 (VLLAGWITIYFVMGYASYLVW), 80–100 (LGLYAVQLAVSWAVLIFFFAA), 104–124 (GLALLHMLLLYGLVVSTALIW), and 130–150 (LAAVLLLPYLAWLTVTASIAY).

This sequence belongs to the TspO/BZRP family. As to quaternary structure, homotetramer. May also form homodimer. As to expression, expressed in erythrocytes (at protein level).

The protein localises to the endoplasmic reticulum membrane. It is found in the cell membrane. Functionally, cholesterol-binding protein involved in the redistribution of cholesterol from lipid droplets to the endoplasmic reticulum. Required to meet cholesterol demands during erythropoietic differentiation. May play a role in transport processes at the plasma membrane of erythrocytes, including regulating VDAC-mediated ATP export, and import of the heme precursors protoporphyrin IX and 5-aminolevulinic acid. The sequence is that of Translocator protein 2 from Canis lupus familiaris (Dog).